Reading from the N-terminus, the 193-residue chain is ER membrane protein complex subunit 4 (193 aa).

The next 2 helical transmembrane spans lie at 91–111 (ILAYMSGNSLQIFSIMTTLML) and 137–157 (LWPAMGAYILFQLLLMGIGVY).

This sequence belongs to the EMC4 family.

Its subcellular location is the endoplasmic reticulum membrane. The polypeptide is ER membrane protein complex subunit 4 (Schizosaccharomyces pombe (strain 972 / ATCC 24843) (Fission yeast)).